A 305-amino-acid polypeptide reads, in one-letter code: NDP-polyphosphate phosphotransferase 1 (305 aa).

Belongs to the polyphosphate kinase 2 (PPK2) family. Class I subfamily.

The enzyme catalyses [phosphate](n) + ATP = [phosphate](n+1) + ADP. It catalyses the reaction [phosphate](n) + CTP = [phosphate](n+1) + CDP. The catalysed reaction is [phosphate](n) + GTP = [phosphate](n+1) + GDP. It carries out the reaction [phosphate](n) + UTP = [phosphate](n+1) + UDP. Shows little dependence on metals. Functionally, uses inorganic polyphosphate (polyP) as a donor to convert NDP to NTP. PolyP hydrolysis is slightly faster with GDP, but it can also use ADP, CDP and UDP. The polypeptide is NDP-polyphosphate phosphotransferase 1 (Ruegeria pomeroyi (strain ATCC 700808 / DSM 15171 / DSS-3) (Silicibacter pomeroyi)).